A 436-amino-acid chain; its full sequence is Methionine aminopeptidase 2 (436 aa).

Residues 1 to 61 (MSEIQPKTEV…KKKKAAPVAS (61 aa)) are disordered. Acidic residues predominate over residues 16–26 (EEEEESDDEED). A compositionally biased stretch (basic residues) spans 44-56 (KKKKKKNKKKKKA). H191 is a substrate binding site. A divalent metal cation-binding residues include D211, D222, and H291. H299 serves as a coordination point for substrate. E324 and E417 together coordinate a divalent metal cation.

Belongs to the peptidase M24A family. Methionine aminopeptidase eukaryotic type 2 subfamily. Co(2+) serves as cofactor. The cofactor is Zn(2+). Mn(2+) is required as a cofactor. Requires Fe(2+) as cofactor.

The protein localises to the cytoplasm. The enzyme catalyses Release of N-terminal amino acids, preferentially methionine, from peptides and arylamides.. Cotranslationally removes the N-terminal methionine from nascent proteins. The N-terminal methionine is often cleaved when the second residue in the primary sequence is small and uncharged (Met-Ala-, Cys, Gly, Pro, Ser, Thr, or Val). The chain is Methionine aminopeptidase 2 (metap2) from Dictyostelium discoideum (Social amoeba).